The sequence spans 217 residues: Proteasome subunit beta type-9 (217 aa).

Residues 1 to 18 constitute a propeptide, removed in mature form; the sequence is MLEESSEPGWLSEEVKTG. Thr-19 serves as the catalytic Nucleophile.

Belongs to the peptidase T1B family. In terms of assembly, the 26S proteasome consists of a 20S proteasome core and two 19S regulatory subunits. The 20S proteasome core is composed of 28 subunits that are arranged in four stacked rings, resulting in a barrel-shaped structure. The two end rings are each formed by seven alpha subunits, and the two central rings are each formed by seven beta subunits. The catalytic chamber with the active sites is on the inside of the barrel. Component of the immunoproteasome, where it displaces the equivalent housekeeping subunit PSMB6. Autocleaved. The resulting N-terminal Thr residue of the mature subunit is responsible for the nucleophile proteolytic activity.

The protein resides in the cytoplasm. It localises to the nucleus. The enzyme catalyses Cleavage of peptide bonds with very broad specificity.. In terms of biological role, the proteasome is a multicatalytic proteinase complex which is characterized by its ability to cleave peptides with Arg, Phe, Tyr, Leu, and Glu adjacent to the leaving group at neutral or slightly basic pH. The proteasome has an ATP-dependent proteolytic activity. This subunit is involved in antigen processing to generate class I binding peptides. This chain is Proteasome subunit beta type-9 (psmb9-a), found in Salmo salar (Atlantic salmon).